Here is a 494-residue protein sequence, read N- to C-terminus: Endoglucanase 1 (494 aa).

The first 25 residues, 1–25, serve as a signal peptide directing secretion; it reads MDCSSPLSLFHLLLVCTVMVKCCSA. Residue Asp-82 is the Nucleophile of the active site. N-linked (GlcNAc...) asparagine glycosylation is found at Asn-254 and Asn-359. Catalysis depends on residues His-411, Asp-462, and Glu-471.

This sequence belongs to the glycosyl hydrolase 9 (cellulase E) family.

The catalysed reaction is Endohydrolysis of (1-&gt;4)-beta-D-glucosidic linkages in cellulose, lichenin and cereal beta-D-glucans.. Its function is as follows. Involved in ripening fruit process. This Persea americana (Avocado) protein is Endoglucanase 1 (CEL1).